A 226-amino-acid chain; its full sequence is MAAPQRSRTTGAPSSGGPSENERGRGGDRRGGDRRGGDRRGGDDRNQFVERVVTINRVAKVVKGGRRFSFTALVVVGDGDGTVGVGYGKAKEVPTAIAKGVEEAKKNFFRVPRIQGTIPHSVRGEAAAGVVFLRPASPGTGVIAGGPVRAVLDCAGIHDVLSKSLGSSNAINIVHATVAALQGLEEPAAVAARRGLPLEDVVPGPILRAQARGRADAAAKASTGVA.

Over residues 1–18 (MAAPQRSRTTGAPSSGGP) the composition is skewed to polar residues. Residues 1–45 (MAAPQRSRTTGAPSSGGPSENERGRGGDRRGGDRRGGDRRGGDDR) form a disordered region. Basic and acidic residues predominate over residues 20–45 (ENERGRGGDRRGGDRRGGDRRGGDDR). The S5 DRBM domain occupies 48 to 111 (FVERVVTINR…EEAKKNFFRV (64 aa)).

This sequence belongs to the universal ribosomal protein uS5 family. In terms of assembly, part of the 30S ribosomal subunit. Contacts proteins S4 and S8.

Functionally, with S4 and S12 plays an important role in translational accuracy. Its function is as follows. Located at the back of the 30S subunit body where it stabilizes the conformation of the head with respect to the body. The sequence is that of Small ribosomal subunit protein uS5 from Beutenbergia cavernae (strain ATCC BAA-8 / DSM 12333 / CCUG 43141 / JCM 11478 / NBRC 16432 / NCIMB 13614 / HKI 0122).